We begin with the raw amino-acid sequence, 189 residues long: Photosystem I assembly protein Ycf4 (189 aa).

The next 2 membrane-spanning stretches (helical) occupy residues 29–49 and 69–89; these read WATI…SSYL and LVMG…WLVI.

The protein belongs to the Ycf4 family.

The protein resides in the cellular thylakoid membrane. In terms of biological role, seems to be required for the assembly of the photosystem I complex. This is Photosystem I assembly protein Ycf4 from Nostoc punctiforme (strain ATCC 29133 / PCC 73102).